We begin with the raw amino-acid sequence, 159 residues long: Phosphopantetheine adenylyltransferase (159 aa).

Serine 9 lines the substrate pocket. Residues serine 9–phenylalanine 10 and histidine 17 each bind ATP. Positions 41, 73, and 87 each coordinate substrate. Residues glycine 88–arginine 90, glutamate 98, and asparagine 123–serine 129 each bind ATP.

The protein belongs to the bacterial CoaD family. Homohexamer. The cofactor is Mg(2+).

Its subcellular location is the cytoplasm. It carries out the reaction (R)-4'-phosphopantetheine + ATP + H(+) = 3'-dephospho-CoA + diphosphate. The protein operates within cofactor biosynthesis; coenzyme A biosynthesis; CoA from (R)-pantothenate: step 4/5. Functionally, reversibly transfers an adenylyl group from ATP to 4'-phosphopantetheine, yielding dephospho-CoA (dPCoA) and pyrophosphate. This chain is Phosphopantetheine adenylyltransferase, found in Clostridium beijerinckii (strain ATCC 51743 / NCIMB 8052) (Clostridium acetobutylicum).